The primary structure comprises 205 residues: Ribonuclease HII (205 aa).

The region spanning 15-205 (SRVCGIDEAG…SFKLRKLGEK (191 aa)) is the RNase H type-2 domain. The a divalent metal cation site is built by Asp-21, Glu-22, and Asp-117.

This sequence belongs to the RNase HII family. Mn(2+) is required as a cofactor. The cofactor is Mg(2+).

The protein resides in the cytoplasm. The enzyme catalyses Endonucleolytic cleavage to 5'-phosphomonoester.. Endonuclease that specifically degrades the RNA of RNA-DNA hybrids. This Chlorobaculum parvum (strain DSM 263 / NCIMB 8327) (Chlorobium vibrioforme subsp. thiosulfatophilum) protein is Ribonuclease HII.